Consider the following 76-residue polypeptide: DNA-directed RNA polymerase subunit epsilon (76 aa).

It belongs to the RNA polymerase subunit epsilon family. RNAP is composed of a core of 2 alpha, a beta and a beta' subunit. The core is associated with a delta subunit, and at least one of epsilon or omega. When a sigma factor is associated with the core the holoenzyme is formed, which can initiate transcription.

The enzyme catalyses RNA(n) + a ribonucleoside 5'-triphosphate = RNA(n+1) + diphosphate. In terms of biological role, a non-essential component of RNA polymerase (RNAP). The polypeptide is DNA-directed RNA polymerase subunit epsilon (Streptococcus equi subsp. zooepidemicus (strain H70)).